The following is a 123-amino-acid chain: MESSLCKKSLMKRRRALRVRKVLKGSPTKPRLSVVKTNKHIYVQLIDDSIGKTLASVSTLSKLNKSQGLTKKNQEVAKVLGTQIAELGKNLQLDRVVFDRGPFKYHGIVSMVADGAREGGLQF.

The protein belongs to the universal ribosomal protein uL18 family. In terms of assembly, part of the 50S ribosomal subunit; part of the 5S rRNA/L5/L18/L25 subcomplex. Contacts the 5S and 23S rRNAs.

Functionally, this is one of the proteins that bind and probably mediate the attachment of the 5S RNA into the large ribosomal subunit, where it forms part of the central protuberance. The sequence is that of Large ribosomal subunit protein uL18 from Chlamydia pneumoniae (Chlamydophila pneumoniae).